Reading from the N-terminus, the 786-residue chain is Ciliated left-right organizer ZP-N domains-containing protein (786 aa).

Positions 1-18 (MWGSVAVVWAICLACIQP) are cleaved as a signal peptide.

As to expression, expressed specifically by cells of the ciliated left-right organizer.

Plays a role in left-right patterning process. The polypeptide is Ciliated left-right organizer ZP-N domains-containing protein (Ciroz) (Mus musculus (Mouse)).